Consider the following 32-residue polypeptide: Alpha-2-macroglobulin homolog (32 aa).

Residues 16–19 constitute a cross-link (isoglutamyl cysteine thioester (Cys-Gln)); it reads CGEQ.

This sequence belongs to the protease inhibitor I39 (alpha-2-macroglobulin) family. Homodimer; disulfide-linked.

It localises to the secreted. In terms of biological role, is able to inhibit all four classes of proteinases by a unique 'trapping' mechanism. This protein has a peptide stretch, called the 'bait region' which contains specific cleavage sites for different proteinases. When a proteinase cleaves the bait region, a conformational change is induced in the protein which traps the proteinase. The entrapped enzyme remains active against low molecular weight substrates (activity against high molecular weight substrates is greatly reduced). Following cleavage in the bait region a thioester bond is hydrolyzed and mediates the covalent binding of the protein to the proteinase. The protein is Alpha-2-macroglobulin homolog of Pacifastacus leniusculus (Signal crayfish).